Here is a 210-residue protein sequence, read N- to C-terminus: Putative RING-H2 finger protein ATL50 (210 aa).

A helical transmembrane segment spans residues 35–55 (IVLLYITLLSIIFFVAALIHL). The segment at 122-164 (CAVCLREFTAEDELRLLPKCSHAFHVECIDTWLLTNSTCPLCR) adopts an RING-type; atypical zinc-finger fold. The interval 187 to 210 (SDGDNSQDSDSSFMLTDLDDVESK) is disordered.

This sequence belongs to the RING-type zinc finger family. ATL subfamily.

It is found in the membrane. The enzyme catalyses S-ubiquitinyl-[E2 ubiquitin-conjugating enzyme]-L-cysteine + [acceptor protein]-L-lysine = [E2 ubiquitin-conjugating enzyme]-L-cysteine + N(6)-ubiquitinyl-[acceptor protein]-L-lysine.. It functions in the pathway protein modification; protein ubiquitination. The protein is Putative RING-H2 finger protein ATL50 (ATL50) of Arabidopsis thaliana (Mouse-ear cress).